The following is a 227-amino-acid chain: MAGLLKESMRIKMYMEGTVNGHYFKCEGEGDGNPFTGTQSMRIHVTEGAPLPFAFDILAPCCEYGSRTFVHHTAEIPDFFKQSFPEGFTWERTTTYEDGGILTAHQDTSLEGNCLIYKVKVLGTNFPADGPVMKNKSGGWEPCTEVVYPENGVLCGRNVMALKVGDRRLICHLYTSYRSKKAVRALTMPGFHFTDIRLQMPRKKKDEYFELYEASVARYSDLPEKAN.

The 2-iminomethyl-5-imidazolinone (Glu-Gly) cross-link spans 63–65 (EYG). Tyr64 is subject to 2,3-didehydrotyrosine.

The protein belongs to the GFP family. Homotetramer. Contains a chromophore consisting of modified amino acid residues. The chromophore is formed by autocatalytic backbone condensation between Xaa-N and Gly-(N+2), oxidation of Tyr-(N+1) to didehydrotyrosine, and formation of a double bond to the alpha-amino nitrogen of residue Xaa-N. Maturation of the chromophore requires nothing other than molecular oxygen. The precise stereochemistry of the tyrosine has not been determined.

Non-fluorescent pigment protein that is lilac in color. The polypeptide is GFP-like non-fluorescent chromoprotein (Radianthus crispa (Leathery sea anemone)).